Reading from the N-terminus, the 374-residue chain is Flavonoid O-methyltransferase-like protein Os11g0303600 (374 aa).

S-adenosyl-L-homocysteine is bound by residues D242, D262, M263, and K276. The active-site Proton acceptor is H280.

The protein belongs to the class I-like SAM-binding methyltransferase superfamily. Cation-independent O-methyltransferase family. COMT subfamily.

The sequence is that of Flavonoid O-methyltransferase-like protein Os11g0303600 from Oryza sativa subsp. japonica (Rice).